The chain runs to 540 residues: Cytochrome P450 27C1 (540 aa).

Heme is bound at residue Cys-486.

Belongs to the cytochrome P450 family. Heme is required as a cofactor. Following L-thyroxine, expressed in the retinal pigment epithelium (at protein level).

It is found in the membrane. It carries out the reaction all-trans-retinol + 2 reduced [adrenodoxin] + O2 + 2 H(+) = all-trans-3,4-didehydroretinol + 2 oxidized [adrenodoxin] + 2 H2O. In terms of biological role, efficiently catalyzes the conversion of all-trans retinol (also called vitamin A1, the precursor of 11-cis retinal) to 3,4-didehydroretinol (also called vitamin A2, the precursor of 11-cis 3,4-didehydroretinal). Also acts on all-trans retinal and all-trans retinoic acid. The replacement of 11-cis retinal chromophore in photopigments with 11-cis 3,4-didehydroretinal enhances sensitivity to long-wavelength light. This may improve vision in fresh water which is often turbid. This is Cytochrome P450 27C1 (cyp27c1) from Danio rerio (Zebrafish).